Here is a 391-residue protein sequence, read N- to C-terminus: MTLQPASGARDLNPQQVRKNHLIASKLSSLYQLWGYERISPPHIERLDTLTAAGGISNNEILKIVSDEPLGLRPEITASIVRAASTRFNEYERPLRFWSAGTSFKCNQSIDGGIDIEESFQSGVELIGTKAINAEIELLSLLIESLEVIEIDQKYKMTLLIGNTYLLELILSSFDSTKIDQIKKILCDLDYIALTTLDVKEEQRMFIKTIMNMRGKPEEVLTNLQNIYGSNSYIDKLKELFTIIEPLAKEKGIEVQLDPTLGTKYKLYSGLTFSLVSSSTSAPVTIAKGGRYDDLVKKFSSSAQNCYGIGFSISVDKVRELVSTSKEKLVNNVKVLIAYKQSANLYKALKQQKELHRKGIISVISHEPLKTNDETNQLLKSNRCNKIEWID.

It belongs to the class-II aminoacyl-tRNA synthetase family. HisZ subfamily. As to quaternary structure, heteromultimer composed of HisG and HisZ subunits.

It localises to the cytoplasm. Its pathway is amino-acid biosynthesis; L-histidine biosynthesis; L-histidine from 5-phospho-alpha-D-ribose 1-diphosphate: step 1/9. Functionally, required for the first step of histidine biosynthesis. May allow the feedback regulation of ATP phosphoribosyltransferase activity by histidine. The protein is ATP phosphoribosyltransferase regulatory subunit of Prochlorococcus marinus (strain NATL1A).